Reading from the N-terminus, the 593-residue chain is Arylsulfatase D (593 aa).

Positions 1–33 (MRSAARRGRAAPAARDSLPVLLFLCLLLKTCEP) are cleaved as a signal peptide. Positions 49 and 50 each coordinate Ca(2+). N61 carries N-linked (GlcNAc...) asparagine glycosylation. Ca(2+) is bound at residue C89. The active-site Nucleophile is the C89. C89 bears the 3-oxoalanine (Cys) mark. The N-linked (GlcNAc...) asparagine glycan is linked to N128. K148 contributes to the substrate binding site. The active site involves H150. Residue H304 participates in substrate binding. Residue N347 is glycosylated (N-linked (GlcNAc...) asparagine). Residues D356 and H357 each contribute to the Ca(2+) site. Position 381 (K381) interacts with substrate.

This sequence belongs to the sulfatase family. Requires Ca(2+) as cofactor. The conversion to 3-oxoalanine (also known as C-formylglycine, FGly), of a serine or cysteine residue in prokaryotes and of a cysteine residue in eukaryotes, is critical for catalytic activity. Expressed in the pancreas, kidney, liver, lung, placenta, brain and heart.

It localises to the lysosome. In Homo sapiens (Human), this protein is Arylsulfatase D (ARSD).